Reading from the N-terminus, the 332-residue chain is Junctional sarcoplasmic reticulum protein 1 (332 aa).

The segment at 1–80 (MTTRGLEDLD…EKELAGKEST (80 aa)) is mediates interaction with CACNA1S. 2 disordered regions span residues 1 to 125 (MTTR…PWGD) and 159 to 332 (APHP…KGRD). Phosphothreonine is present on threonine 51. Over residues 66-76 (GLKKMEKELAG) the composition is skewed to basic and acidic residues. Pro residues-rich tracts occupy residues 98 to 116 (QAPP…PPRT) and 177 to 197 (APKP…PGPP). A compositionally biased stretch (low complexity) spans 221-232 (GGSISEASGEES). A phosphoserine mark is found at serine 223 and serine 228. 2 stretches are compositionally biased toward basic and acidic residues: residues 239–256 (GSQE…EKLK) and 283–307 (RRWE…EHGK).

As to quaternary structure, interacts with CACNA1S, CACNB1 and calsequestrin. As to expression, specifically expressed in skeletal muscle. Detected in skeletal muscle and tongue (at protein level).

The protein resides in the sarcoplasmic reticulum membrane. It localises to the endoplasmic reticulum membrane. Involved in skeletal muscle excitation/contraction coupling (EC), probably acting as a regulator of the voltage-sensitive calcium channel CACNA1S. EC is a physiological process whereby an electrical signal (depolarization of the plasma membrane) is converted into a chemical signal, a calcium gradient, by the opening of ryanodine receptor calcium release channels. May regulate CACNA1S membrane targeting and activity. This is Junctional sarcoplasmic reticulum protein 1 (Jsrp1) from Mus musculus (Mouse).